The chain runs to 60 residues: Large ribosomal subunit protein bL32 (60 aa).

Residues 1 to 25 (MAVQQNKKSPSKRGMHRSHNALNVP) are disordered. Residues 9 to 19 (SPSKRGMHRSH) show a composition bias toward basic residues.

Belongs to the bacterial ribosomal protein bL32 family.

The sequence is that of Large ribosomal subunit protein bL32 from Polaromonas naphthalenivorans (strain CJ2).